The sequence spans 662 residues: Biosynthetic arginine decarboxylase (662 aa).

Lysine 127 is modified (N6-(pyridoxal phosphate)lysine). Residue 307 to 317 (FDVGGGLGVDY) coordinates substrate.

This sequence belongs to the Orn/Lys/Arg decarboxylase class-II family. SpeA subfamily. Homotetramer. Requires Mg(2+) as cofactor. It depends on pyridoxal 5'-phosphate as a cofactor.

Its subcellular location is the periplasm. The enzyme catalyses L-arginine + H(+) = agmatine + CO2. Its pathway is amine and polyamine biosynthesis; agmatine biosynthesis; agmatine from L-arginine: step 1/1. Its function is as follows. Catalyzes the biosynthesis of agmatine from arginine. The polypeptide is Biosynthetic arginine decarboxylase (Shigella flexneri).